Consider the following 143-residue polypeptide: MAKKITAYIKLQVKAAQANPSPPVGPALGQHGVNIMEFCKAFNARTQGIEPGLPTPVIITVYSDRSFTFETKSTPASVLLKKAAGLTSGSARPNTVKVGTVTRAQLEDIAKAKNADLTAADMEAAVRTIAGSARSMGLNVEGV.

This sequence belongs to the universal ribosomal protein uL11 family. As to quaternary structure, part of the ribosomal stalk of the 50S ribosomal subunit. Interacts with L10 and the large rRNA to form the base of the stalk. L10 forms an elongated spine to which L12 dimers bind in a sequential fashion forming a multimeric L10(L12)X complex. In terms of processing, one or more lysine residues are methylated.

Its function is as follows. Forms part of the ribosomal stalk which helps the ribosome interact with GTP-bound translation factors. This chain is Large ribosomal subunit protein uL11, found in Pseudomonas syringae pv. tomato (strain ATCC BAA-871 / DC3000).